The sequence spans 261 residues: Taurine import ATP-binding protein TauB (261 aa).

Positions 4-233 constitute an ABC transporter domain; it reads LQLEGIGAHY…RYSAGESARA (230 aa). Position 38–45 (38–45) interacts with ATP; the sequence is GPSGSGKT.

The protein belongs to the ABC transporter superfamily. Taurine importer (TC 3.A.1.17.1) family. The complex is composed of two ATP-binding proteins (TauB), two transmembrane proteins (TauC) and a solute-binding protein (TauA).

The protein resides in the cell inner membrane. It catalyses the reaction taurine(out) + ATP + H2O = taurine(in) + ADP + phosphate + H(+). Its function is as follows. Part of the ABC transporter complex TauABC involved in taurine import. Responsible for energy coupling to the transport system. This chain is Taurine import ATP-binding protein TauB, found in Pseudomonas syringae pv. tomato (strain ATCC BAA-871 / DC3000).